The chain runs to 255 residues: Phosphate import ATP-binding protein PstB (255 aa).

In terms of domain architecture, ABC transporter spans M9–I250. G41–S48 is a binding site for ATP.

It belongs to the ABC transporter superfamily. Phosphate importer (TC 3.A.1.7) family. The complex is composed of two ATP-binding proteins (PstB), two transmembrane proteins (PstC and PstA) and a solute-binding protein (PstS).

Its subcellular location is the cell inner membrane. It carries out the reaction phosphate(out) + ATP + H2O = ADP + 2 phosphate(in) + H(+). Its function is as follows. Part of the ABC transporter complex PstSACB involved in phosphate import. Responsible for energy coupling to the transport system. This Nitratidesulfovibrio vulgaris (strain ATCC 29579 / DSM 644 / CCUG 34227 / NCIMB 8303 / VKM B-1760 / Hildenborough) (Desulfovibrio vulgaris) protein is Phosphate import ATP-binding protein PstB.